The primary structure comprises 585 residues: Chaperonin CPN60-like 1, mitochondrial (585 aa).

Residues 1-32 (MYRLVSNVASKARIARKCTSQIGSRLNSTRNY) constitute a mitochondrion transit peptide.

Belongs to the chaperonin (HSP60) family.

It localises to the mitochondrion. Implicated in mitochondrial protein import and macromolecular assembly. May facilitate the correct folding of imported proteins. May also prevent misfolding and promote the refolding and proper assembly of unfolded polypeptides generated under stress conditions in the mitochondrial matrix. The chain is Chaperonin CPN60-like 1, mitochondrial from Arabidopsis thaliana (Mouse-ear cress).